The chain runs to 224 residues: ATP-dependent dethiobiotin synthetase BioD (224 aa).

Residue 14–19 (GIGKTV) coordinates ATP. Thr-18 contacts Mg(2+). Residue Lys-39 is part of the active site. Ser-43 provides a ligand contact to substrate. ATP contacts are provided by residues Asp-56, 117–120 (EGVG), and 177–178 (NE). Mg(2+) contacts are provided by Asp-56 and Glu-117.

Belongs to the dethiobiotin synthetase family. Homodimer. Mg(2+) is required as a cofactor.

It is found in the cytoplasm. It carries out the reaction (7R,8S)-7,8-diammoniononanoate + CO2 + ATP = (4R,5S)-dethiobiotin + ADP + phosphate + 3 H(+). It functions in the pathway cofactor biosynthesis; biotin biosynthesis; biotin from 7,8-diaminononanoate: step 1/2. Functionally, catalyzes a mechanistically unusual reaction, the ATP-dependent insertion of CO2 between the N7 and N8 nitrogen atoms of 7,8-diaminopelargonic acid (DAPA, also called 7,8-diammoniononanoate) to form a ureido ring. The chain is ATP-dependent dethiobiotin synthetase BioD from Xanthomonas campestris pv. campestris (strain ATCC 33913 / DSM 3586 / NCPPB 528 / LMG 568 / P 25).